Here is a 107-residue protein sequence, read N- to C-terminus: Small ribosomal subunit protein uS17 (107 aa).

It belongs to the universal ribosomal protein uS17 family. As to quaternary structure, part of the 30S ribosomal subunit.

One of the primary rRNA binding proteins, it binds specifically to the 5'-end of 16S ribosomal RNA. The protein is Small ribosomal subunit protein uS17 of Thermotoga petrophila (strain ATCC BAA-488 / DSM 13995 / JCM 10881 / RKU-1).